The primary structure comprises 206 residues: MMNSKKQDAFQRLIGALKVLPNVGPKSAQRMAYHLLQQKRKEAEELVDALQTALRQVRHCARCNTFCEGGLCDICADETRDGRRLMVVHMPADVSNIEAANCHDGLYFVLMGQINTALGMDVSAIALDRLAQRLDGGEIEEIIIATAFTAEGNATAYVLSEFFKNLPYKVSRLSQGIPLGGELEYVDAGTLAQAVYERRLIKEGGA.

The C4-type zinc-finger motif lies at 60–75; it reads CARCNTFCEGGLCDIC. The Toprim domain maps to 83 to 178; it reads RRLMVVHMPA…KVSRLSQGIP (96 aa).

This sequence belongs to the RecR family.

Its function is as follows. May play a role in DNA repair. It seems to be involved in an RecBC-independent recombinational process of DNA repair. It may act with RecF and RecO. The polypeptide is Recombination protein RecR (Neisseria gonorrhoeae (strain NCCP11945)).